The sequence spans 378 residues: Glutamate 5-kinase (378 aa).

Lys-20 lines the ATP pocket. Ser-60, Asp-147, and Asn-159 together coordinate substrate. ATP is bound by residues 179–180 and 221–227; these read TD and TGGMATK. A PUA domain is found at 286-364; that stretch reads AGDIVIDAGA…QEIYKVLGYE (79 aa).

This sequence belongs to the glutamate 5-kinase family.

The protein localises to the cytoplasm. The enzyme catalyses L-glutamate + ATP = L-glutamyl 5-phosphate + ADP. The protein operates within amino-acid biosynthesis; L-proline biosynthesis; L-glutamate 5-semialdehyde from L-glutamate: step 1/2. In terms of biological role, catalyzes the transfer of a phosphate group to glutamate to form L-glutamate 5-phosphate. The protein is Glutamate 5-kinase of Photobacterium profundum (strain SS9).